The chain runs to 187 residues: UPF0301 protein GOX1459 (187 aa).

Belongs to the UPF0301 (AlgH) family.

This is UPF0301 protein GOX1459 from Gluconobacter oxydans (strain 621H) (Gluconobacter suboxydans).